The sequence spans 231 residues: NDR1/HIN1-like protein 3 (231 aa).

The chain crosses the membrane as a helical span at residues 47-67 (VIFNILITIAVLLGIAALIIW). N-linked (GlcNAc...) asparagine glycans are attached at residues asparagine 102, asparagine 135, asparagine 145, and asparagine 215.

In terms of assembly, may form oligomers or be a component of larger protein complex in plasma membranes. Post-translationally, glycosylated. As to expression, expressed in roots, young and senescing leaves, cauline leaves, stems and siliques.

Its subcellular location is the cell membrane. Confers resistance to Pseudomonas syringae pv. tomato DC3000 (Pst DC3000). The chain is NDR1/HIN1-like protein 3 from Arabidopsis thaliana (Mouse-ear cress).